The primary structure comprises 101 residues: Integration host factor subunit beta (101 aa).

Positions Pro57–Ser76 are disordered.

This sequence belongs to the bacterial histone-like protein family. Heterodimer of an alpha and a beta chain.

Functionally, this protein is one of the two subunits of integration host factor, a specific DNA-binding protein that functions in genetic recombination as well as in transcriptional and translational control. This Nitrobacter winogradskyi (strain ATCC 25391 / DSM 10237 / CIP 104748 / NCIMB 11846 / Nb-255) protein is Integration host factor subunit beta.